The primary structure comprises 613 residues: MSKAKEGDYGSIKKVSGPVVVADNMGGSAMYELVRVGTGELIGEIIRLEGDTATIQVYEETSGLTVGDGVLRTKQPLSVDLGPGILGNIFDGIQRPLKAIADVSGDVFIPRGVNVPSLDQTKQWEFHPSSYRVGDRVTGGDIIGTVPENTLLDHKVMLIPQAKGTITYIAPAGNYNINERIIEVEFQGTKYEYCMKQSWPVRSPRPVVEKLLADTPLLTGQRVLDSLFPGVRGGTCAIPGAFGCGKTVISQALSKYSNSDGIVYVGCGERGNEMAEVLMDFPQLTMTMPDGREESIMKRTTLVANTSNMPVAAREASIYTGITLSEYFRDMGYNFAMMADSTSRWAEALREISGRLAEMPADSGYPAYLGARLASFYERSGRVACIGSPEREGSVTIVGAVSPPGGDFSDPVTSATLGIVQVFWGLDKKLAQRKHFPSVNWLISYSKYLNALEPFYEKFDNDFVDIRQVAREVLQKEDELNEIVQLVGKDALAESDKIILETADFLKEDYLAQNSFTKYDKYCPFYKSVGMMRNIVTFHRLATQAIERTATGNSDGQKLLSNIIKAKLGDLLYKVSSQKFEDPSDGESVVTGRLNELNDELKEKFRALEDEYS.

240 to 247 (GAFGCGKT) contributes to the ATP binding site.

This sequence belongs to the ATPase alpha/beta chains family. As to quaternary structure, V-ATPase is a heteromultimeric enzyme composed of a peripheral catalytic V1 complex (main components: subunits A, B, C, D, E, and F) attached to an integral membrane V0 proton pore complex (main component: the proteolipid protein).

The enzyme catalyses ATP + H2O + 4 H(+)(in) = ADP + phosphate + 5 H(+)(out). Catalytic subunit of the peripheral V1 complex of vacuolar ATPase. V-ATPase vacuolar ATPase is responsible for acidifying a variety of intracellular compartments in eukaryotic cells. The chain is V-type proton ATPase catalytic subunit A isoform 2 from Acetabularia acetabulum (Mermaid's wine glass).